Reading from the N-terminus, the 930-residue chain is Protein translocase subunit SecA (930 aa).

Residues Gln-87, 105–109 (GEGKT), and Asp-515 each bind ATP. 4 residues coordinate Zn(2+): Cys-914, Cys-916, Cys-925, and His-926.

Belongs to the SecA family. Monomer and homodimer. Part of the essential Sec protein translocation apparatus which comprises SecA, SecYEG and auxiliary proteins SecDF-YajC and YidC. Requires Zn(2+) as cofactor.

The protein resides in the cell inner membrane. The protein localises to the cytoplasm. It carries out the reaction ATP + H2O + cellular proteinSide 1 = ADP + phosphate + cellular proteinSide 2.. In terms of biological role, part of the Sec protein translocase complex. Interacts with the SecYEG preprotein conducting channel. Has a central role in coupling the hydrolysis of ATP to the transfer of proteins into and across the cell membrane, serving both as a receptor for the preprotein-SecB complex and as an ATP-driven molecular motor driving the stepwise translocation of polypeptide chains across the membrane. The protein is Protein translocase subunit SecA of Burkholderia thailandensis (strain ATCC 700388 / DSM 13276 / CCUG 48851 / CIP 106301 / E264).